A 182-amino-acid chain; its full sequence is MNNYFTTVYPIKKILEKNGCKNCKVGYTGQRAFIIKCEKCKNYDRGNKLKKKNGRVEVSTSQELSIFPIGSMVSYINNKDEFRKGGYITKITADYFIYVTPDFETKYRVRYKNIKKMWVGDVYKVSSDIVSLSETTQPKTDFPVKIGNITVYYASDNTKKKNFMKTKKYKTSLEWYNYFHKN.

This sequence belongs to the mimivirus L6/L7/L57 family.

This is an uncharacterized protein from Acanthamoeba polyphaga mimivirus (APMV).